We begin with the raw amino-acid sequence, 73 residues long: Lactogenin (73 aa).

Glutamine 1 bears the Pyrrolidone carboxylic acid mark.

This sequence belongs to the pancreatic ribonuclease family. Milk.

It is found in the secreted. In terms of biological role, secretory RNase specific towards pyrimidine bases, with higher activity towards poly C than poly U. Inhibits cell-free translation. In Bos taurus (Bovine), this protein is Lactogenin.